Here is a 509-residue protein sequence, read N- to C-terminus: ATP synthase subunit alpha (509 aa).

169–176 (GDRQTGKT) is a binding site for ATP.

The protein belongs to the ATPase alpha/beta chains family. F-type ATPases have 2 components, CF(1) - the catalytic core - and CF(0) - the membrane proton channel. CF(1) has five subunits: alpha(3), beta(3), gamma(1), delta(1), epsilon(1). CF(0) has three main subunits: a(1), b(2) and c(9-12). The alpha and beta chains form an alternating ring which encloses part of the gamma chain. CF(1) is attached to CF(0) by a central stalk formed by the gamma and epsilon chains, while a peripheral stalk is formed by the delta and b chains.

Its subcellular location is the cell inner membrane. The catalysed reaction is ATP + H2O + 4 H(+)(in) = ADP + phosphate + 5 H(+)(out). In terms of biological role, produces ATP from ADP in the presence of a proton gradient across the membrane. The alpha chain is a regulatory subunit. The chain is ATP synthase subunit alpha from Mesorhizobium japonicum (strain LMG 29417 / CECT 9101 / MAFF 303099) (Mesorhizobium loti (strain MAFF 303099)).